Reading from the N-terminus, the 461-residue chain is Argininosuccinate lyase (461 aa).

The protein belongs to the lyase 1 family. Argininosuccinate lyase subfamily.

The protein resides in the cytoplasm. It carries out the reaction 2-(N(omega)-L-arginino)succinate = fumarate + L-arginine. The protein operates within amino-acid biosynthesis; L-arginine biosynthesis; L-arginine from L-ornithine and carbamoyl phosphate: step 3/3. This chain is Argininosuccinate lyase, found in Shewanella piezotolerans (strain WP3 / JCM 13877).